The chain runs to 68 residues: Small ribosomal subunit protein bS21 (68 aa).

The interval 35 to 68 (HYEKPSEKRARERAAAVRRARKMERKRMERDGIK) is disordered. Over residues 37–49 (EKPSEKRARERAA) the composition is skewed to basic and acidic residues. Residues 50 to 59 (AVRRARKMER) are compositionally biased toward basic residues.

It belongs to the bacterial ribosomal protein bS21 family.

This chain is Small ribosomal subunit protein bS21, found in Sphingopyxis alaskensis (strain DSM 13593 / LMG 18877 / RB2256) (Sphingomonas alaskensis).